The following is a 141-amino-acid chain: Large ribosomal subunit protein uL11 (141 aa).

The protein belongs to the universal ribosomal protein uL11 family. As to quaternary structure, part of the ribosomal stalk of the 50S ribosomal subunit. Interacts with L10 and the large rRNA to form the base of the stalk. L10 forms an elongated spine to which L12 dimers bind in a sequential fashion forming a multimeric L10(L12)X complex. In terms of processing, one or more lysine residues are methylated.

Its function is as follows. Forms part of the ribosomal stalk which helps the ribosome interact with GTP-bound translation factors. The protein is Large ribosomal subunit protein uL11 of Campylobacter lari (strain RM2100 / D67 / ATCC BAA-1060).